The following is a 287-amino-acid chain: Large ribosomal subunit protein uL2 (287 aa).

The disordered stretch occupies residues 220 to 287 (VRGSVMNPCD…SKRSRGGRDS (68 aa)). Residues 271–287 (VRRRRRISKRSRGGRDS) are compositionally biased toward basic residues.

The protein belongs to the universal ribosomal protein uL2 family. In terms of assembly, part of the 50S ribosomal subunit. Forms a bridge to the 30S subunit in the 70S ribosome.

One of the primary rRNA binding proteins. Required for association of the 30S and 50S subunits to form the 70S ribosome, for tRNA binding and peptide bond formation. It has been suggested to have peptidyltransferase activity; this is somewhat controversial. Makes several contacts with the 16S rRNA in the 70S ribosome. This is Large ribosomal subunit protein uL2 from Prochlorococcus marinus (strain MIT 9515).